Consider the following 125-residue polypeptide: Small ribosomal subunit protein uS12c (125 aa).

Belongs to the universal ribosomal protein uS12 family. In terms of assembly, part of the 30S ribosomal subunit.

It localises to the plastid. It is found in the chloroplast. Functionally, with S4 and S5 plays an important role in translational accuracy. Located at the interface of the 30S and 50S subunits. The protein is Small ribosomal subunit protein uS12c (rps12) of Tupiella akineta (Green alga).